A 332-amino-acid chain; its full sequence is Adenosine deaminase (332 aa).

Zn(2+) contacts are provided by H12 and H14. The substrate site is built by H14, D16, and G170. Residue H197 coordinates Zn(2+). E200 (proton donor) is an active-site residue. D278 lines the Zn(2+) pocket. A substrate-binding site is contributed by D279.

The protein belongs to the metallo-dependent hydrolases superfamily. Adenosine and AMP deaminases family. Adenosine deaminase subfamily. Requires Zn(2+) as cofactor.

The enzyme catalyses adenosine + H2O + H(+) = inosine + NH4(+). The catalysed reaction is 2'-deoxyadenosine + H2O + H(+) = 2'-deoxyinosine + NH4(+). Catalyzes the hydrolytic deamination of adenosine and 2-deoxyadenosine. The chain is Adenosine deaminase from Erwinia tasmaniensis (strain DSM 17950 / CFBP 7177 / CIP 109463 / NCPPB 4357 / Et1/99).